A 402-amino-acid chain; its full sequence is Protein prenyltransferase alpha subunit repeat-containing protein 1 (402 aa).

A2 carries the N-acetylalanine modification. 4 PFTA repeats span residues 87-120, 122-155, 180-213, and 219-252; these read LIDVTCTLLLLNPDFTTAWNVRKELILSGTLNPI, DLHLGKLALTKFPKSPETWIHRRWVLQQLIQETS, EMEVCGEAAGRYPSNYNAWSHRIWVLQHLAKLDV, and ELSSTKHWASMHVSDHSGFHYRQFLLKSLISQTV. Positions 263-282 are disordered; it reads LRSEPALVPPKDEEAAVSTE. A PFTA 5 repeat occupies 295–328; sequence EVEFSTDLIDSYPGHETLWCHRRHIFYLQHHLNA.

The protein belongs to the protein prenyltransferase subunit alpha family.

The protein is Protein prenyltransferase alpha subunit repeat-containing protein 1 (PTAR1) of Homo sapiens (Human).